Consider the following 329-residue polypeptide: Tryptophan--tRNA ligase (329 aa).

ATP contacts are provided by residues 9–11 (QPS) and 17–18 (GN). The 'HIGH' region motif lies at 10 to 18 (PSGIPTIGN). Residue Asp133 coordinates L-tryptophan. ATP-binding positions include 145–147 (GDD), Val184, and 193–197 (KMSKS). The short motif at 193–197 (KMSKS) is the 'KMSKS' region element.

It belongs to the class-I aminoacyl-tRNA synthetase family. Homodimer.

The protein localises to the cytoplasm. The catalysed reaction is tRNA(Trp) + L-tryptophan + ATP = L-tryptophyl-tRNA(Trp) + AMP + diphosphate + H(+). In terms of biological role, catalyzes the attachment of tryptophan to tRNA(Trp). This is Tryptophan--tRNA ligase from Staphylococcus epidermidis (strain ATCC 35984 / DSM 28319 / BCRC 17069 / CCUG 31568 / BM 3577 / RP62A).